A 506-amino-acid chain; its full sequence is Probable Xaa-Pro aminopeptidase BDCG_04966 (506 aa).

Positions 285, 296, 433, and 471 each coordinate Mn(2+).

The protein belongs to the peptidase M24B family. Mn(2+) serves as cofactor.

It catalyses the reaction Release of any N-terminal amino acid, including proline, that is linked to proline, even from a dipeptide or tripeptide.. Functionally, catalyzes the removal of a penultimate prolyl residue from the N-termini of peptides. This is Probable Xaa-Pro aminopeptidase BDCG_04966 from Ajellomyces dermatitidis (strain ER-3 / ATCC MYA-2586) (Blastomyces dermatitidis).